Here is a 520-residue protein sequence, read N- to C-terminus: Non-specific phospholipase C6 (520 aa).

The N-terminal stretch at 1–31 (MKPSSASRFSLTFSHFLTLYCLLTQTHVAQG) is a signal peptide.

It belongs to the bacterial phospholipase C family. Expressed in roots, leaves, stems, flowers and siliques.

The protein localises to the secreted. The polypeptide is Non-specific phospholipase C6 (NPC6) (Arabidopsis thaliana (Mouse-ear cress)).